Reading from the N-terminus, the 78-residue chain is Conotoxin TsMEKL-P012 (78 aa).

Positions 1 to 19 (MEKLTILLLLAAVLVLAQA) are cleaved as a signal peptide. A propeptide spanning residues 20–38 (LIKKGGGEKRQKEKINFLS) is cleaved from the precursor. Intrachain disulfides connect Cys-52–Cys-66, Cys-59–Cys-70, and Cys-65–Cys-75.

This sequence belongs to the conotoxin O2 superfamily. In terms of tissue distribution, expressed by the venom duct.

It localises to the secreted. The sequence is that of Conotoxin TsMEKL-P012 from Conus tessulatus (Tessellate cone).